Here is a 36-residue protein sequence, read N- to C-terminus: Photosystem I reaction center subunit VIII (36 aa).

The helical transmembrane segment at 8–28 (AILVPIVGLVFPALSMALFFI) threads the bilayer.

This sequence belongs to the PsaI family.

The protein resides in the plastid. The protein localises to the chloroplast thylakoid membrane. Functionally, may help in the organization of the PsaL subunit. The chain is Photosystem I reaction center subunit VIII from Phaeodactylum tricornutum (strain CCAP 1055/1).